An 834-amino-acid chain; its full sequence is 5-hydroxytryptamine receptor 2A (834 aa).

Residues 1–230 are Extracellular-facing; that stretch reads MAHETSFNDA…TQLLRMAVTS (230 aa). A disordered region spans residues 56 to 75; that stretch reads TDDGQLEDTNNNNNSKRYYS. N68, N97, N161, N175, N183, N194, N203, and N209 each carry an N-linked (GlcNAc...) asparagine glycan. The chain crosses the membrane as a helical span at residues 231–253; it reads VLLGLMILVTIIGNVFVIAAIIL. The Cytoplasmic segment spans residues 254–263; the sequence is ERNLQNVANY. Residues 264–285 form a helical membrane-spanning segment; that stretch reads LVASLAVADLFVACLVMPLGAV. At 286–300 the chain is on the extracellular side; sequence YEISQGWILGPELCD. An intrachain disulfide couples C299 to C378. Residues 301–322 form a helical membrane-spanning segment; sequence IWTSCDVLCCTASILHLVAIAV. Residues 323–341 lie on the Cytoplasmic side of the membrane; it reads DRYWAVTNIDYIHSRTSNR. A helical transmembrane segment spans residues 342–364; the sequence is VFMMIFCVWTAAVIVSLAPQFGW. The Extracellular segment spans residues 365 to 391; sequence KDPDYLQRIEQQKCMVSQDVSYQVFAT. The helical transmembrane segment at 392 to 413 threads the bilayer; that stretch reads CCTFYVPLLVILALYWKIYQTA. Over 414 to 752 the chain is Cytoplasmic; that stretch reads RKRIHRRRPR…AKRERKAAKT (339 aa). Disordered stretches follow at residues 420–442, 460–516, 531–599, 617–640, and 674–743; these read RRPR…ATDT, KTGS…STSG, QQGK…SEDQ, LEQV…TSNA, and STLT…TLEA. Composition is skewed to polar residues over residues 482–502 and 532–542; these read GNST…SNVD and QGKSTAKSSAA. The span at 551–564 shows a compositional bias: basic and acidic residues; sequence RQEDDGQRPEHGEQ. The segment covering 565 to 575 has biased composition (acidic residues); sequence EDREELEDQDE. Positions 582–593 are enriched in low complexity; it reads TTATSATTAAGT. The segment covering 674–694 has biased composition (polar residues); sequence STLTSCNQSHPLCGTANESPS. Positions 702–723 are enriched in low complexity; that stretch reads QPTTPQQQPHQQAHQQQQQQQQ. Residues 753 to 776 form a helical membrane-spanning segment; that stretch reads LAIITGAFVVCWLPFFVMALTMPL. Topologically, residues 777 to 785 are extracellular; sequence CAACQISDS. A helical transmembrane segment spans residues 786–808; sequence VASLFLWLGYFNSTLNPVIYTIF. The Cytoplasmic segment spans residues 809 to 834; that stretch reads SPEFRQAFKRILFGGHRPVHYRSGKL.

It belongs to the G-protein coupled receptor 1 family.

Its subcellular location is the cell membrane. In terms of biological role, this is one of the several different receptors for 5-hydroxytryptamine (serotonin), a biogenic hormone that functions as a neurotransmitter, a hormone, and a mitogen. The activity of this receptor is mediated by G proteins which inhibit adenylate cyclase. The protein is 5-hydroxytryptamine receptor 2A (5-HT1A) of Drosophila melanogaster (Fruit fly).